Reading from the N-terminus, the 115-residue chain is U3-lycotoxin-Ls1j (115 aa).

The signal sequence occupies residues 1-20; the sequence is MKFVLLFGVFLVTLFSYSSA. Positions 21-44 are excised as a propeptide; it reads EMLDDFDQADEDELLSLIEKEEAR. 4 cysteine pairs are disulfide-bonded: Cys48-Cys63, Cys55-Cys72, Cys62-Cys87, and Cys74-Cys85.

The protein belongs to the neurotoxin 19 (CSTX) family. 01 subfamily. In terms of tissue distribution, expressed by the venom gland.

It is found in the secreted. The chain is U3-lycotoxin-Ls1j from Lycosa singoriensis (Wolf spider).